A 209-amino-acid polypeptide reads, in one-letter code: MGTVHLIDHPLVQHKLTMMRRKDASTNSFRRLANEISALMTYEVLRDIPMQEIEIETPLEVTTGRVIDGKKLVFVSILRAGTGILDGMLTIVPGARVGHIGLYRDPRTLVAVEYYFKMPGDLHERDVVVVDPLLATGNSAVAAVERLKECGPKSIKFVCLLTCPEGVAALDKAHPDVPIYTAAVDRQLDEHGYILPGIGDAGDRIFGTK.

5-phospho-alpha-D-ribose 1-diphosphate contacts are provided by residues Arg79, Arg104, and 131–139 (DPLLATGNS). Residues Ile194 and 199–201 (GDA) contribute to the uracil site. Asp200 contacts 5-phospho-alpha-D-ribose 1-diphosphate.

Belongs to the UPRTase family. Mg(2+) is required as a cofactor.

The catalysed reaction is UMP + diphosphate = 5-phospho-alpha-D-ribose 1-diphosphate + uracil. It functions in the pathway pyrimidine metabolism; UMP biosynthesis via salvage pathway; UMP from uracil: step 1/1. With respect to regulation, allosterically activated by GTP. Catalyzes the conversion of uracil and 5-phospho-alpha-D-ribose 1-diphosphate (PRPP) to UMP and diphosphate. This chain is Uracil phosphoribosyltransferase, found in Rhodococcus opacus (strain B4).